The sequence spans 156 residues: 17.4 kDa class I heat shock protein (156 aa).

Residues 42-156 (DVAAFTNAKV…PEVKSVDISG (115 aa)) enclose the sHSP domain.

Belongs to the small heat shock protein (HSP20) family. In terms of assembly, may form oligomeric structures. Binds to AKR2A.

It localises to the cytoplasm. This is 17.4 kDa class I heat shock protein (HSP17.4A) from Arabidopsis thaliana (Mouse-ear cress).